We begin with the raw amino-acid sequence, 142 residues long: Large ribosomal subunit protein uL11 (142 aa).

The protein belongs to the universal ribosomal protein uL11 family. Part of the ribosomal stalk of the 50S ribosomal subunit. Interacts with L10 and the large rRNA to form the base of the stalk. L10 forms an elongated spine to which L12 dimers bind in a sequential fashion forming a multimeric L10(L12)X complex. Post-translationally, one or more lysine residues are methylated.

In terms of biological role, forms part of the ribosomal stalk which helps the ribosome interact with GTP-bound translation factors. This Pseudoalteromonas atlantica (strain T6c / ATCC BAA-1087) protein is Large ribosomal subunit protein uL11.